The chain runs to 195 residues: NADH-quinone oxidoreductase subunit B (195 aa).

4 residues coordinate [4Fe-4S] cluster: Cys74, Cys75, Cys139, and Cys169.

It belongs to the complex I 20 kDa subunit family. NDH-1 is composed of 14 different subunits. Subunits NuoB, C, D, E, F, and G constitute the peripheral sector of the complex. The cofactor is [4Fe-4S] cluster.

Its subcellular location is the cell inner membrane. It carries out the reaction a quinone + NADH + 5 H(+)(in) = a quinol + NAD(+) + 4 H(+)(out). In terms of biological role, NDH-1 shuttles electrons from NADH, via FMN and iron-sulfur (Fe-S) centers, to quinones in the respiratory chain. The immediate electron acceptor for the enzyme in this species is believed to be ubiquinone. Couples the redox reaction to proton translocation (for every two electrons transferred, four hydrogen ions are translocated across the cytoplasmic membrane), and thus conserves the redox energy in a proton gradient. This Methylorubrum populi (strain ATCC BAA-705 / NCIMB 13946 / BJ001) (Methylobacterium populi) protein is NADH-quinone oxidoreductase subunit B.